The following is a 172-amino-acid chain: RNA pyrophosphohydrolase (172 aa).

In terms of domain architecture, Nudix hydrolase spans 6–149 (GFRANVGIII…KRDVYRKVMK (144 aa)). The Nudix box motif lies at 38–59 (GGLDDGESAEEAMYRELYEEVG).

It belongs to the Nudix hydrolase family. RppH subfamily. A divalent metal cation is required as a cofactor.

Functionally, accelerates the degradation of transcripts by removing pyrophosphate from the 5'-end of triphosphorylated RNA, leading to a more labile monophosphorylated state that can stimulate subsequent ribonuclease cleavage. The protein is RNA pyrophosphohydrolase of Shewanella denitrificans (strain OS217 / ATCC BAA-1090 / DSM 15013).